A 128-amino-acid chain; its full sequence is Type-4 ice-structuring protein LS-12 (128 aa).

Positions 1-20 (MKFSLVATIVLLALAQGSFA) are cleaved as a signal peptide. Q21 carries the post-translational modification Pyrrolidone carboxylic acid.

Belongs to the apolipoprotein A1/A4/E family.

Its subcellular location is the secreted. Its function is as follows. Antifreeze proteins lower the blood freezing point. The protein is Type-4 ice-structuring protein LS-12 of Myoxocephalus octodecemspinosus (Longhorn sculpin).